The primary structure comprises 442 residues: Pyruvate dehydrogenase complex protein X component, mitochondrial (442 aa).

The N-terminal 35 residues, 1 to 35 (MASLAAACRVSARLAARKLQHDAAVRGFRSSAAAL), are a transit peptide targeting the mitochondrion. The 77-residue stretch at 37–113 (AQNFMMPALS…QVGTRIAVVA (77 aa)) folds into the Lipoyl-binding domain. Lys78 is modified (N6-lipoyllysine). The tract at residues 119 to 169 (ITKLEIPPDEGPQQLKAAAPAPAPTPAPAPASPQPQFAAPTPSPPKASTKV) is disordered. Residues 139–151 (APAPTPAPAPASP) are compositionally biased toward pro residues. Positions 152 to 169 (QPQFAAPTPSPPKASTKV) are enriched in low complexity. One can recognise a Peripheral subunit-binding (PSBD) domain in the interval 175-215 (PLLPSVHQLIKENGLDESAVSNITPTGPGGRILKGDVLAYL). The tract at residues 244–269 (AKPVEPEKPQEEKASAPAPAPRAPEP) is disordered. Over residues 245–257 (KPVEPEKPQEEKA) the composition is skewed to basic and acidic residues. The tract at residues 317–336 (PLPTNYQPTADELFDQVLGL) is interaction to the E2 core.

This sequence belongs to the 2-oxoacid dehydrogenase family. In terms of assembly, eukaryotic pyruvate dehydrogenase (PDH) complexes are organized as a core consisting of the oligomeric dihydrolipoamide acetyl-transferase (E2), around which are arranged multiple copies of pyruvate dehydrogenase (E1), dihydrolipoamide dehydrogenase (E3) and protein X (E3BP) bound by non-covalent bonds. The Chaetomium thermophilum PDH complex contains 60 E2 units, 12 E3BP units, about 20 E1 units, and 12 or more E3 units. The units are organized in 1 E2 60-mer, 4 E3BP trimers, about 20 E1 tetramers, and a maximum of 12 E3 dimers. The E3BP trimers are bound inside the icosahedral core with tetrahedral symmetry.

The protein localises to the mitochondrion. The 10-megadalton pyruvate dehydrogenase complex contains multiple copies of three enzymatic components: pyruvate dehydrogenase (E1), dihydrolipoamide acetyltransferase (E2) and lipoamide dehydrogenase (E3) and catalyzes the overall oxidative decarboxylation of pyruvate to form acetyl-CoA and CO(2). E3BP is responsible for tethering E3 in proximity to the core, forming the entire metabolon, and the number of E3s is limited by the number of E3BPs. Within the complex, pyruvate and thiamine pyrophosphate (TPP or vitamin B1) are bound by pyruvate dehydrogenase E1 subunits alpha and beta and pyruvate is decarboxylated leading to the 2-carbon hydrohyethyl bound to TPP. The E2 component contains covalently-bound lipoyl cofactors and transfers the hydroxyethyl group from TPP to an oxidized form of covalently bound lipoamide, and the resulting acetyl group is then transferred to free coenzyme A to form acetyl-CoA and reduced dihydrolipoamide-E2. Finally, the flavoprotein dihydrolipoamide dehydrogenase (E3) re-oxidizes the lipoyl group of dihydrolipoamide-E2 to form lipoamide-E2 and NADH. A fourth subunit, E3BP, is responsible for tethering E3 in proximity to the core, forming the entire metabolon. This is Pyruvate dehydrogenase complex protein X component, mitochondrial from Chaetomium thermophilum (strain DSM 1495 / CBS 144.50 / IMI 039719) (Thermochaetoides thermophila).